A 232-amino-acid polypeptide reads, in one-letter code: Orotate phosphoribosyltransferase (232 aa).

5-phospho-alpha-D-ribose 1-diphosphate is bound by residues R107, K108, K111, and 133–141 (EDLTTDGGS). Orotate is bound at residue T137.

Belongs to the purine/pyrimidine phosphoribosyltransferase family. PyrE subfamily. In terms of assembly, homodimer. It depends on Mg(2+) as a cofactor.

The enzyme catalyses orotidine 5'-phosphate + diphosphate = orotate + 5-phospho-alpha-D-ribose 1-diphosphate. It functions in the pathway pyrimidine metabolism; UMP biosynthesis via de novo pathway; UMP from orotate: step 1/2. In terms of biological role, catalyzes the transfer of a ribosyl phosphate group from 5-phosphoribose 1-diphosphate to orotate, leading to the formation of orotidine monophosphate (OMP). The chain is Orotate phosphoribosyltransferase from Cereibacter sphaeroides (strain ATCC 17029 / ATH 2.4.9) (Rhodobacter sphaeroides).